Here is a 269-residue protein sequence, read N- to C-terminus: Formamidopyrimidine-DNA glycosylase (269 aa).

Proline 2 serves as the catalytic Schiff-base intermediate with DNA. The Proton donor role is filled by glutamate 3. The Proton donor; for beta-elimination activity role is filled by lysine 57. DNA is bound by residues histidine 90, arginine 109, and lysine 150. The FPG-type zinc-finger motif lies at 235–269 (QVYGRGGEPCRVCGTPIQMAKHGQRSTFFCPACQH). The active-site Proton donor; for delta-elimination activity is arginine 259.

The protein belongs to the FPG family. In terms of assembly, monomer. It depends on Zn(2+) as a cofactor.

It carries out the reaction Hydrolysis of DNA containing ring-opened 7-methylguanine residues, releasing 2,6-diamino-4-hydroxy-5-(N-methyl)formamidopyrimidine.. It catalyses the reaction 2'-deoxyribonucleotide-(2'-deoxyribose 5'-phosphate)-2'-deoxyribonucleotide-DNA = a 3'-end 2'-deoxyribonucleotide-(2,3-dehydro-2,3-deoxyribose 5'-phosphate)-DNA + a 5'-end 5'-phospho-2'-deoxyribonucleoside-DNA + H(+). Functionally, involved in base excision repair of DNA damaged by oxidation or by mutagenic agents. Acts as a DNA glycosylase that recognizes and removes damaged bases. Has a preference for oxidized purines, such as 7,8-dihydro-8-oxoguanine (8-oxoG). Has AP (apurinic/apyrimidinic) lyase activity and introduces nicks in the DNA strand. Cleaves the DNA backbone by beta-delta elimination to generate a single-strand break at the site of the removed base with both 3'- and 5'-phosphates. The sequence is that of Formamidopyrimidine-DNA glycosylase from Sodalis glossinidius (strain morsitans).